A 115-amino-acid polypeptide reads, in one-letter code: Probable non-functional immunoglobulin heavy variable 8-51-1 (115 aa).

An N-terminal signal peptide occupies residues Met-1 to Gly-17. The segment at Glu-18–Ser-42 is framework-1. The 97-residue stretch at Ala-19 to Gly-115 folds into the Ig-like domain. A complementarity-determining-1 region spans residues Trp-43–Glu-50. The segment at Ile-51–Val-67 is framework-2. Cys-55 and Cys-113 are disulfide-bonded. The interval Ile-68–Gln-75 is complementarity-determining-2. The interval Tyr-76 to Cys-113 is framework-3. The segment at Ala-114–Gly-115 is complementarity-determining-3.

As to quaternary structure, immunoglobulins are composed of two identical heavy chains and two identical light chains; disulfide-linked.

Its subcellular location is the secreted. It is found in the cell membrane. Its function is as follows. Probable non-functional open reading frame (ORF) of V region of the variable domain of immunoglobulin heavy chains. Non-functional ORF generally cannot participate in the synthesis of a productive immunoglobulin chain due to altered V-(D)-J or switch recombination and/or splicing site (at mRNA level) and/or conserved amino acid change (protein level). Immunoglobulins, also known as antibodies, are membrane-bound or secreted glycoproteins produced by B lymphocytes. In the recognition phase of humoral immunity, the membrane-bound immunoglobulins serve as receptors which, upon binding of a specific antigen, trigger the clonal expansion and differentiation of B lymphocytes into immunoglobulins-secreting plasma cells. Secreted immunoglobulins mediate the effector phase of humoral immunity, which results in the elimination of bound antigens. The antigen binding site is formed by the variable domain of one heavy chain, together with that of its associated light chain. Thus, each immunoglobulin has two antigen binding sites with remarkable affinity for a particular antigen. The variable domains are assembled by a process called V-(D)-J rearrangement and can then be subjected to somatic hypermutations which, after exposure to antigen and selection, allow affinity maturation for a particular antigen. The chain is Probable non-functional immunoglobulin heavy variable 8-51-1 from Homo sapiens (Human).